A 239-amino-acid chain; its full sequence is uncharacterized protein (239 aa).

An HTH cro/C1-type domain is found at 13-66 (IEYLVDKLNGPSEFARKTGVTLSTITRWRKGEADPSRSNLVKIAEVTGVSIEWL). The H-T-H motif DNA-binding region spans 24–43 (SEFARKTGVTLSTITRWRKG).

This is an uncharacterized protein from Haemophilus influenzae (strain ATCC 51907 / DSM 11121 / KW20 / Rd).